The following is a 605-amino-acid chain: Phosphoenolpyruvate carboxykinase (ATP) (605 aa).

Residues 27–48 are compositionally biased toward low complexity; the sequence is SGPSSSFINNNNSNNNNNKSSN. Residues 27-67 are disordered; the sequence is SGPSSSFINNNNSNNNNNKSSNMFNHDHVNKTNLHPGGVKP. 307-314 contributes to the ATP binding site; it reads GLSGTGKT.

The protein belongs to the phosphoenolpyruvate carboxykinase (ATP) family.

It carries out the reaction oxaloacetate + ATP = phosphoenolpyruvate + ADP + CO2. Its pathway is carbohydrate biosynthesis; gluconeogenesis. This chain is Phosphoenolpyruvate carboxykinase (ATP) (acu-6), found in Neurospora crassa (strain ATCC 24698 / 74-OR23-1A / CBS 708.71 / DSM 1257 / FGSC 987).